The sequence spans 267 residues: MAAGVIRPLCDFQLPLLRHHPFLPSDPEPPETSEEEEEEEEEEEEEEGEGEGLGGCGRILPSSGRAEATEEAAPEGPGSPETPLQLLRFSELISDDIRRYFGRKDKGQDPDACDVYADSRPPRSTARELYYADLVRLARGGSLEDEDTPEPRVPQGQVCRPGLSGDRAQPLGPLAELFDYGLQQYWGSRAAAGWSLTLERKYGHITPMAQRKLPPSFWKEPTPSPLGLLHPGTPDFSDLLASWSTEACPELPGRGTPALEGARPAEA.

Disordered stretches follow at residues 19 to 88 (HHPF…QLLR), 142 to 163 (SLED…RPGL), and 247 to 267 (ACPE…PAEA). The segment covering 28–50 (EPPETSEEEEEEEEEEEEEEGEG) has biased composition (acidic residues). Residues 74–83 (PEGPGSPETP) show a composition bias toward low complexity.

Functionally, plays a critical role in intestinal function. Acts by promoting the development of enteroendocrine cells (EECs) of the gastrointestinal tract and pancreas. It is thereby required for normal enteroendocrine peptide hormone secretion. The sequence is that of Protein PERCC1 from Homo sapiens (Human).